Consider the following 151-residue polypeptide: uncharacterized protein (151 aa).

The protein to B.subtilis pcf and to sigma factors.

This is an uncharacterized protein from Bacillus subtilis (strain 168).